The chain runs to 211 residues: Uracil phosphoribosyltransferase (211 aa).

30 to 34 (KGLVR) is a GTP binding site. 5-phospho-alpha-D-ribose 1-diphosphate-binding positions include Arg-79, Arg-104, and 133-141 (DPMLATGIT). Uracil-binding positions include Ile-197 and 202–204 (GDA). Asp-203 serves as a coordination point for 5-phospho-alpha-D-ribose 1-diphosphate.

Belongs to the UPRTase family. Mg(2+) serves as cofactor.

It carries out the reaction UMP + diphosphate = 5-phospho-alpha-D-ribose 1-diphosphate + uracil. It functions in the pathway pyrimidine metabolism; UMP biosynthesis via salvage pathway; UMP from uracil: step 1/1. Allosterically activated by GTP. Its function is as follows. Catalyzes the conversion of uracil and 5-phospho-alpha-D-ribose 1-diphosphate (PRPP) to UMP and diphosphate. The chain is Uracil phosphoribosyltransferase from Pyrobaculum islandicum (strain DSM 4184 / JCM 9189 / GEO3).